The primary structure comprises 76 residues: Anaredoxin (76 aa).

In terms of domain architecture, HNH spans Cys-24 to Lys-66.

The protein belongs to the HNH nuclease family.

Putative P-450 reductase. This chain is Anaredoxin, found in Nostoc sp. (strain PCC 7120 / SAG 25.82 / UTEX 2576).